The primary structure comprises 888 residues: Autophagy-related protein 9 (888 aa).

The segment at 1–170 (MASNIFSRIK…PYTTPMGPQP (170 aa)) is disordered. Residues 1–255 (MASNIFSRIK…CTRKMSGLWN (255 aa)) are Cytoplasmic-facing. The segment covering 13 to 24 (SGGSQSFYQQLR) has biased composition (polar residues). The segment covering 28 to 38 (DPEYDPGLDEE) has biased composition (acidic residues). The segment covering 123-143 (RATNPGSSRTPASVGPSSART) has biased composition (polar residues). A helical membrane pass occupies residues 256–276 (FAIWLYTFFFIWKCVQYFVEI). The Lumenal segment spans residues 277–422 (RRLTYIRDFY…RLLSQKLRQR (146 aa)). Residues 423–443 (FLFAGFLNLLFAPVVLAYVVI) traverse the membrane as a helical segment. Over 444 to 511 (VYFFTYYYEY…PKRITEAVAR (68 aa)) the chain is Cytoplasmic. An intramembrane segment occupies 512 to 532 (TIAFMSGAITAILAIGSVLDS). The Cytoplasmic segment spans residues 533-544 (ELFLNFEITKDR). Residues 545–565 (PVIFYLGVFAAIWATTRGMVS) traverse the membrane as a helical segment. Topologically, residues 566 to 611 (EETLVFNPEYALRNVIEYTRYVPDHWKNKLHSSEVKQEFSELYKMK) are lumenal. Residues 612–632 (VVIFLEEMMGIVTTPMLLLFS) form a helical membrane-spanning segment. Residues 633-642 (LPRCSDQIVD) lie on the Cytoplasmic side of the membrane. The stretch at 643–663 (FFREFTIHVDGLGYVCSFAVF) is an intramembrane region. Topologically, residues 664 to 888 (DFQKGPGNTG…QRPRRGGGMV (225 aa)) are cytoplasmic. Disordered regions lie at residues 748–770 (GRTG…PRIG) and 834–866 (EPGG…DPEA).

It belongs to the ATG9 family. As to quaternary structure, homotrimer; forms a homotrimer with a central pore that forms a path between the two membrane leaflets. Post-translationally, phosphorylated by ATG1. ATG1 phosphorylation is required for ATG18 interaction and preautophagosome elongation.

It localises to the preautophagosomal structure membrane. It is found in the cytoplasmic vesicle membrane. The protein localises to the golgi apparatus membrane. The protein resides in the endoplasmic reticulum membrane. It catalyses the reaction a 1,2-diacyl-sn-glycero-3-phosphocholine(in) = a 1,2-diacyl-sn-glycero-3-phosphocholine(out). The enzyme catalyses a 1,2-diacyl-sn-glycero-3-phospho-L-serine(in) = a 1,2-diacyl-sn-glycero-3-phospho-L-serine(out). The catalysed reaction is a 1,2-diacyl-sn-glycero-3-phosphoethanolamine(in) = a 1,2-diacyl-sn-glycero-3-phosphoethanolamine(out). It carries out the reaction a 1,2-diacyl-sn-glycero-3-phospho-(1D-myo-inositol-3-phosphate)(in) = a 1,2-diacyl-sn-glycero-3-phospho-(1D-myo-inositol-3-phosphate)(out). Phospholipid scramblase involved in autophagy and cytoplasm to vacuole transport (Cvt) vesicle formation. Cycles between the preautophagosomal structure/phagophore assembly site (PAS) and the cytoplasmic vesicle pool and supplies membrane for the growing autophagosome. Lipid scramblase activity plays a key role in preautophagosomal structure/phagophore assembly by distributing the phospholipids that arrive through ATG2 from the cytoplasmic to the luminal leaflet of the bilayer, thereby driving autophagosomal membrane expansion. Required for mitophagy. Also involved in endoplasmic reticulum-specific autophagic process and is essential for the survival of cells subjected to severe ER stress. Different machineries are required for anterograde trafficking to the PAS during either the Cvt pathway or bulk autophagy and for retrograde trafficking. Autophagy is required for proper vegetative growth, asexual/sexual reproduction, and full virulence. Autophagy is particularly involved in the biosynthesis of deoxynivalenol (DON), an important virulence determinant. Required for aerial hyphae development and lipid droplet degradation in response to starvation. The polypeptide is Autophagy-related protein 9 (Gibberella zeae (strain ATCC MYA-4620 / CBS 123657 / FGSC 9075 / NRRL 31084 / PH-1) (Wheat head blight fungus)).